The chain runs to 244 residues: HTH-type transcriptional regulator Cmr (244 aa).

An a nucleoside 3',5'-cyclic phosphate-binding site is contributed by 41 to 160 (GSAPLHRDDV…RRWLSSVAQR (120 aa)). Residues 174-237 (RPLPAQVAQL…YAVIEITDQH (64 aa)) enclose the HTH crp-type domain. Positions 197–216 (QRTLAAMLGAQRPSINKILK) form a DNA-binding region, H-T-H motif.

Positively regulates the expression of at least groEL2. The chain is HTH-type transcriptional regulator Cmr (cmr) from Mycobacterium tuberculosis (strain CDC 1551 / Oshkosh).